Here is a 747-residue protein sequence, read N- to C-terminus: Fibroblast growth factor receptor (747 aa).

The first 24 residues, methionine 1–leucine 24, serve as a signal peptide directing secretion. Over lysine 25 to tyrosine 288 the chain is Extracellular. 3 N-linked (GlcNAc...) asparagine glycosylation sites follow: asparagine 26, asparagine 42, and asparagine 63. The interval glutamate 47–threonine 68 is disordered. Ig-like C2-type domains lie at proline 74–aspartate 167 and proline 175–threonine 267. Cysteine 99 and cysteine 151 are joined by a disulfide. Residues asparagine 161, asparagine 185, asparagine 217, asparagine 227, and asparagine 240 are each glycosylated (N-linked (GlcNAc...) asparagine). Residues cysteine 198 and cysteine 251 are joined by a disulfide bond. Residues leucine 289 to cysteine 309 traverse the membrane as a helical segment. The Cytoplasmic segment spans residues asparagine 310–valine 747. The region spanning isoleucine 377–leucine 660 is the Protein kinase domain. ATP is bound by residues isoleucine 383–valine 391 and lysine 412. Catalysis depends on aspartate 525, which acts as the Proton acceptor. The residue at position 556 (tyrosine 556) is a Phosphotyrosine; by autocatalysis. The disordered stretch occupies residues tyrosine 679 to proline 731. A compositionally biased stretch (basic and acidic residues) spans isoleucine 710–glutamate 719.

Belongs to the protein kinase superfamily. Tyr protein kinase family. Fibroblast growth factor receptor subfamily.

It is found in the membrane. The enzyme catalyses L-tyrosyl-[protein] + ATP = O-phospho-L-tyrosyl-[protein] + ADP + H(+). Functionally, receptor for basic fibroblast growth factor. In Ciona intestinalis (Transparent sea squirt), this protein is Fibroblast growth factor receptor (FGFR).